The following is a 474-amino-acid chain: ATP synthase subunit beta (474 aa).

151 to 158 contacts ATP; sequence GGAGVGKT.

The protein belongs to the ATPase alpha/beta chains family. In terms of assembly, F-type ATPases have 2 components, CF(1) - the catalytic core - and CF(0) - the membrane proton channel. CF(1) has five subunits: alpha(3), beta(3), gamma(1), delta(1), epsilon(1). CF(0) has three main subunits: a(1), b(2) and c(9-12). The alpha and beta chains form an alternating ring which encloses part of the gamma chain. CF(1) is attached to CF(0) by a central stalk formed by the gamma and epsilon chains, while a peripheral stalk is formed by the delta and b chains.

It is found in the cell inner membrane. The enzyme catalyses ATP + H2O + 4 H(+)(in) = ADP + phosphate + 5 H(+)(out). Functionally, produces ATP from ADP in the presence of a proton gradient across the membrane. The catalytic sites are hosted primarily by the beta subunits. The polypeptide is ATP synthase subunit beta (Ruegeria sp. (strain TM1040) (Silicibacter sp.)).